The primary structure comprises 192 residues: dTTP/UTP pyrophosphatase (192 aa).

Catalysis depends on D71, which acts as the Proton acceptor.

The protein belongs to the Maf family. YhdE subfamily. Requires a divalent metal cation as cofactor.

The protein localises to the cytoplasm. The catalysed reaction is dTTP + H2O = dTMP + diphosphate + H(+). It carries out the reaction UTP + H2O = UMP + diphosphate + H(+). Functionally, nucleoside triphosphate pyrophosphatase that hydrolyzes dTTP and UTP. May have a dual role in cell division arrest and in preventing the incorporation of modified nucleotides into cellular nucleic acids. This Clostridium kluyveri (strain NBRC 12016) protein is dTTP/UTP pyrophosphatase.